Reading from the N-terminus, the 224-residue chain is dTTP/UTP pyrophosphatase (224 aa).

Asp77 (proton acceptor) is an active-site residue.

The protein belongs to the Maf family. YhdE subfamily. It depends on a divalent metal cation as a cofactor.

Its subcellular location is the cytoplasm. The catalysed reaction is dTTP + H2O = dTMP + diphosphate + H(+). The enzyme catalyses UTP + H2O = UMP + diphosphate + H(+). In terms of biological role, nucleoside triphosphate pyrophosphatase that hydrolyzes dTTP and UTP. May have a dual role in cell division arrest and in preventing the incorporation of modified nucleotides into cellular nucleic acids. The chain is dTTP/UTP pyrophosphatase from Dehalococcoides mccartyi (strain ATCC BAA-2266 / KCTC 15142 / 195) (Dehalococcoides ethenogenes (strain 195)).